A 271-amino-acid chain; its full sequence is DNA-directed RNA polymerase subunit Rpo3 (271 aa).

The protein belongs to the archaeal Rpo3/eukaryotic RPB3 RNA polymerase subunit family. In terms of assembly, part of the RNA polymerase complex.

It localises to the cytoplasm. The catalysed reaction is RNA(n) + a ribonucleoside 5'-triphosphate = RNA(n+1) + diphosphate. Its function is as follows. DNA-dependent RNA polymerase (RNAP) catalyzes the transcription of DNA into RNA using the four ribonucleoside triphosphates as substrates. The protein is DNA-directed RNA polymerase subunit Rpo3 of Picrophilus torridus (strain ATCC 700027 / DSM 9790 / JCM 10055 / NBRC 100828 / KAW 2/3).